Consider the following 436-residue polypeptide: Trigger factor (436 aa).

Positions 162 to 247 (GDRVIIDFEG…LNNVSEPTLP (86 aa)) constitute a PPIase FKBP-type domain.

It belongs to the FKBP-type PPIase family. Tig subfamily.

It localises to the cytoplasm. The enzyme catalyses [protein]-peptidylproline (omega=180) = [protein]-peptidylproline (omega=0). Functionally, involved in protein export. Acts as a chaperone by maintaining the newly synthesized protein in an open conformation. Functions as a peptidyl-prolyl cis-trans isomerase. This Neisseria gonorrhoeae (strain ATCC 700825 / FA 1090) protein is Trigger factor.